The chain runs to 158 residues: Ribonuclease H (158 aa).

An RNase H type-1 domain is found at 5–146 (MRKQIEIFTD…CDQLAKQGAE (142 aa)). Mg(2+) contacts are provided by Asp-14, Glu-52, Asp-74, and Asp-138.

The protein belongs to the RNase H family. Monomer. Mg(2+) is required as a cofactor.

The protein resides in the cytoplasm. It carries out the reaction Endonucleolytic cleavage to 5'-phosphomonoester.. Endonuclease that specifically degrades the RNA of RNA-DNA hybrids. The protein is Ribonuclease H of Mannheimia succiniciproducens (strain KCTC 0769BP / MBEL55E).